Consider the following 213-residue polypeptide: Adenylate kinase (213 aa).

Position 10–15 (10–15 (GSGKGS)) interacts with ATP. The NMP stretch occupies residues 30–60 (STGNLFRAILKEDSELARKIKEINVSGGKLV). Residues T31, R36, 58–60 (KLV), 87–90 (GYPR), and Q94 each bind AMP. Residues 123-160 (GRWMCPKCAGIYNIHFKKPQVDGVCDNDQATLYQRADD) are LID. An ATP-binding site is contributed by R124. 2 residues coordinate Zn(2+): C127 and C130. 133–134 (IY) lines the ATP pocket. The Zn(2+) site is built by C147 and D150. Residues R157 and R168 each contribute to the AMP site. Q196 contacts ATP.

It belongs to the adenylate kinase family. In terms of assembly, monomer.

The protein resides in the cytoplasm. The enzyme catalyses AMP + ATP = 2 ADP. Its pathway is purine metabolism; AMP biosynthesis via salvage pathway; AMP from ADP: step 1/1. Functionally, catalyzes the reversible transfer of the terminal phosphate group between ATP and AMP. Plays an important role in cellular energy homeostasis and in adenine nucleotide metabolism. In Ureaplasma urealyticum serovar 10 (strain ATCC 33699 / Western), this protein is Adenylate kinase.